Consider the following 192-residue polypeptide: NF-kappa-B inhibitor-interacting Ras-like protein 1 (192 aa).

Residues 1 to 192 (MGKGCKVVVC…KSKGTPSNDI (192 aa)) form a small GTPase-like region. 11–18 (GMASVGKT) contacts GTP. The Effector region signature appears at 35 to 43 (TSDTQEDIY). GTP is bound by residues 61–65 (DTRGL) and 120–123 (NKCE). A disordered region spans residues 169 to 192 (TQPQSKSAFPLPGRKSKGTPSNDI).

This sequence belongs to the small GTPase superfamily. Ras family. KappaB-Ras subfamily.

Its subcellular location is the cytoplasm. Atypical Ras-like protein that acts as a potent regulator of NF-kappa-B activity by preventing the degradation of NF-kappa-B inhibitor beta (NFKBIB) by most signals, explaining why NFKBIB is more resistant to degradation. This chain is NF-kappa-B inhibitor-interacting Ras-like protein 1 (nkiras1), found in Danio rerio (Zebrafish).